A 447-amino-acid polypeptide reads, in one-letter code: 3-phosphoshikimate 1-carboxyvinyltransferase 2 (447 aa).

K40, S41, and R45 together coordinate 3-phosphoshikimate. Residue K40 coordinates phosphoenolpyruvate. The phosphoenolpyruvate site is built by G109 and R138. S184, S185, Q186, D329, and H356 together coordinate 3-phosphoshikimate. Q186 is a phosphoenolpyruvate binding site. The Proton acceptor role is filled by D329. Residues R360, R403, and K428 each contribute to the phosphoenolpyruvate site.

Belongs to the EPSP synthase family. In terms of assembly, monomer.

It localises to the cytoplasm. It carries out the reaction 3-phosphoshikimate + phosphoenolpyruvate = 5-O-(1-carboxyvinyl)-3-phosphoshikimate + phosphate. It functions in the pathway metabolic intermediate biosynthesis; chorismate biosynthesis; chorismate from D-erythrose 4-phosphate and phosphoenolpyruvate: step 6/7. Functionally, catalyzes the transfer of the enolpyruvyl moiety of phosphoenolpyruvate (PEP) to the 5-hydroxyl of shikimate-3-phosphate (S3P) to produce enolpyruvyl shikimate-3-phosphate and inorganic phosphate. This is 3-phosphoshikimate 1-carboxyvinyltransferase 2 from Halalkalibacterium halodurans (strain ATCC BAA-125 / DSM 18197 / FERM 7344 / JCM 9153 / C-125) (Bacillus halodurans).